The chain runs to 364 residues: MTKKLDPPTAPSSDEDDVETSEDDSSSSEEDEPIKSLPATTAAAPAKSTAVSAATPAKSTSVSAAAPSKSTAVSAAADSDSGSESETDSDSESTDPPKSGSGKTIASKKKDDPSSSTATLALPAVKSGAKRAASEAATTSTKRVKKDEESVKKPALFQRLWSDDDEISMLQGMIDYHADTGKSPSADTNAFYEFQKKSISFEVSKSQFSDKVRSLRKKYRAKEGKDEPRFVKAHDKKAFELSKFIWGPKGIALDSNAKSNGVSKKSASKTKEKLDSVKQDLAFVGVSSTNGDDWFEKSSLARMIAGSGIDEYYVRQKWSSFTLETKKIVEEKFQLMQAKELEAMLDKSVRLTDLTSYFVDASKN.

Positions 1 to 149 are disordered; that stretch reads MTKKLDPPTA…STKRVKKDEE (149 aa). Residues 13–32 show a composition bias toward acidic residues; that stretch reads SDEDDVETSEDDSSSSEEDE. Residues 39 to 80 show a composition bias toward low complexity; that stretch reads ATTAAAPAKSTAVSAATPAKSTSVSAAAPSKSTAVSAAADSD. Positions 81 to 93 are enriched in acidic residues; the sequence is SGSESETDSDSES.

This sequence belongs to the GeBP family.

The polypeptide is Probable transcription factor At4g00390 (Arabidopsis thaliana (Mouse-ear cress)).